Reading from the N-terminus, the 36-residue chain is Conotoxin Bt11.4 (36 aa).

Cystine bridges form between cysteine 2–cysteine 16, cysteine 9–cysteine 21, cysteine 15–cysteine 26, and cysteine 20–cysteine 33.

It belongs to the conotoxin I1 superfamily. As to expression, expressed by the venom duct.

It localises to the secreted. In Conus betulinus (Beech cone), this protein is Conotoxin Bt11.4.